The following is a 265-amino-acid chain: 5'-nucleotidase SurE (265 aa).

Asp8, Asp9, Ser40, and Asn98 together coordinate a divalent metal cation.

The protein belongs to the SurE nucleotidase family. It depends on a divalent metal cation as a cofactor.

It localises to the cytoplasm. The catalysed reaction is a ribonucleoside 5'-phosphate + H2O = a ribonucleoside + phosphate. Its function is as follows. Nucleotidase that shows phosphatase activity on nucleoside 5'-monophosphates. This is 5'-nucleotidase SurE from Nostoc sp. (strain PCC 7120 / SAG 25.82 / UTEX 2576).